A 186-amino-acid chain; its full sequence is Pyridoxal 5'-phosphate synthase subunit PdxT (186 aa).

An L-glutamine-binding site is contributed by 47-49 (GES). The Nucleophile role is filled by cysteine 79. L-glutamine is bound by residues arginine 106 and 134–135 (IR). Active-site charge relay system residues include histidine 170 and glutamate 172.

The protein belongs to the glutaminase PdxT/SNO family. In terms of assembly, in the presence of PdxS, forms a dodecamer of heterodimers. Only shows activity in the heterodimer.

It catalyses the reaction aldehydo-D-ribose 5-phosphate + D-glyceraldehyde 3-phosphate + L-glutamine = pyridoxal 5'-phosphate + L-glutamate + phosphate + 3 H2O + H(+). The catalysed reaction is L-glutamine + H2O = L-glutamate + NH4(+). It participates in cofactor biosynthesis; pyridoxal 5'-phosphate biosynthesis. In terms of biological role, catalyzes the hydrolysis of glutamine to glutamate and ammonia as part of the biosynthesis of pyridoxal 5'-phosphate. The resulting ammonia molecule is channeled to the active site of PdxS. The protein is Pyridoxal 5'-phosphate synthase subunit PdxT of Methanothrix thermoacetophila (strain DSM 6194 / JCM 14653 / NBRC 101360 / PT) (Methanosaeta thermophila).